The following is a 131-amino-acid chain: Aspartate 1-decarboxylase (131 aa).

S25 (schiff-base intermediate with substrate; via pyruvic acid) is an active-site residue. S25 carries the post-translational modification Pyruvic acid (Ser). Residue T57 participates in substrate binding. The Proton donor role is filled by Y58. 73-75 lines the substrate pocket; it reads GAA.

It belongs to the PanD family. In terms of assembly, heterooctamer of four alpha and four beta subunits. Pyruvate is required as a cofactor. Post-translationally, is synthesized initially as an inactive proenzyme, which is activated by self-cleavage at a specific serine bond to produce a beta-subunit with a hydroxyl group at its C-terminus and an alpha-subunit with a pyruvoyl group at its N-terminus.

Its subcellular location is the cytoplasm. It catalyses the reaction L-aspartate + H(+) = beta-alanine + CO2. It functions in the pathway cofactor biosynthesis; (R)-pantothenate biosynthesis; beta-alanine from L-aspartate: step 1/1. In terms of biological role, catalyzes the pyruvoyl-dependent decarboxylation of aspartate to produce beta-alanine. This Acaryochloris marina (strain MBIC 11017) protein is Aspartate 1-decarboxylase.